We begin with the raw amino-acid sequence, 134 residues long: UPF0412 protein YaaI (134 aa).

The signal sequence occupies residues 1-23 (MKSVFTISASLAISLMLCCTAQA).

This sequence belongs to the UPF0412 family.

This Escherichia coli (strain K12) protein is UPF0412 protein YaaI.